A 388-amino-acid polypeptide reads, in one-letter code: Omega-hydroxy-beta-dihydromenaquinone-9 sulfotransferase Stf3 (388 aa).

This sequence belongs to the Stf3 family.

It carries out the reaction omega-hydroxy-beta-dihydromenaquinone-9 + 3'-phosphoadenylyl sulfate = omega-sulfo-beta-dihydromenaquinone-9 + adenosine 3',5'-bisphosphate + H(+). Its function is as follows. Involved in the biosynthesis of sulfomenaquinone (SMK, initially named S881 on the basis of its mass), which is localized in the outer envelope of M.bovis and negatively regulates its virulence. Catalyzes the transfer of a sulfonate group from 3'-phosphoadenosine-5'-phosphosulfate (PAPS) to omega-hydroxy-beta-dihydromenaquinone-9, generating omega-sulfo-beta-dihydromenaquinone-9 (sulfomenaquinone). This Mycobacterium bovis (strain ATCC BAA-935 / AF2122/97) protein is Omega-hydroxy-beta-dihydromenaquinone-9 sulfotransferase Stf3.